We begin with the raw amino-acid sequence, 273 residues long: Large ribosomal subunit protein uL2 (273 aa).

The interval 196 to 273 is disordered; it reads GNSDHGLESS…SSKYIIERRK (78 aa). Composition is skewed to basic residues over residues 209–220 and 255–264; these read GRTRWMGRRPRN and LKTRAPKKQS.

This sequence belongs to the universal ribosomal protein uL2 family. Part of the 50S ribosomal subunit. Forms a bridge to the 30S subunit in the 70S ribosome.

One of the primary rRNA binding proteins. Required for association of the 30S and 50S subunits to form the 70S ribosome, for tRNA binding and peptide bond formation. It has been suggested to have peptidyltransferase activity; this is somewhat controversial. Makes several contacts with the 16S rRNA in the 70S ribosome. The sequence is that of Large ribosomal subunit protein uL2 from Phocaeicola vulgatus (strain ATCC 8482 / DSM 1447 / JCM 5826 / CCUG 4940 / NBRC 14291 / NCTC 11154) (Bacteroides vulgatus).